Here is a 60-residue protein sequence, read N- to C-terminus: Large ribosomal subunit protein uL30 (60 aa).

This sequence belongs to the universal ribosomal protein uL30 family. As to quaternary structure, part of the 50S ribosomal subunit.

This Alcanivorax borkumensis (strain ATCC 700651 / DSM 11573 / NCIMB 13689 / SK2) protein is Large ribosomal subunit protein uL30.